The primary structure comprises 49 residues: uncharacterized protein (49 aa).

Residues 5–25 (LTTIFSVVIVLAIFLYFGLLI) form a helical membrane-spanning segment.

Belongs to the plectrovirus ORF12 protein family.

It is found in the host membrane. This is an uncharacterized protein from Spiroplasma virus SpV1-R8A2 B (SpV1).